A 786-amino-acid chain; its full sequence is Endonuclease MutS2 (786 aa).

ATP is bound at residue 335–342 (GPNTGGKT). Positions 529-549 (SQKNAERERKEAEEHRKQSEK) are disordered. Residues 711–786 (LDLRGERYED…GLGVTVVELK (76 aa)) form the Smr domain.

This sequence belongs to the DNA mismatch repair MutS family. MutS2 subfamily. Homodimer. Binds to stalled ribosomes, contacting rRNA.

Functionally, endonuclease that is involved in the suppression of homologous recombination and thus may have a key role in the control of bacterial genetic diversity. Acts as a ribosome collision sensor, splitting the ribosome into its 2 subunits. Detects stalled/collided 70S ribosomes which it binds and splits by an ATP-hydrolysis driven conformational change. Acts upstream of the ribosome quality control system (RQC), a ribosome-associated complex that mediates the extraction of incompletely synthesized nascent chains from stalled ribosomes and their subsequent degradation. Probably generates substrates for RQC. The sequence is that of Endonuclease MutS2 from Bacillus mycoides (strain KBAB4) (Bacillus weihenstephanensis).